We begin with the raw amino-acid sequence, 344 residues long: Dihydroorotase (344 aa).

Residues H13 and H15 each coordinate Zn(2+). Substrate-binding positions include 15–17 and N41; that span reads HFR. Zn(2+) contacts are provided by K98, H135, and H173. K98 is subject to N6-carboxylysine. H135 contributes to the substrate binding site. L218 is a binding site for substrate. Residue D246 coordinates Zn(2+). The active site involves D246. Substrate-binding residues include H250 and A262.

The protein belongs to the metallo-dependent hydrolases superfamily. DHOase family. Class II DHOase subfamily. Homodimer. It depends on Zn(2+) as a cofactor.

The catalysed reaction is (S)-dihydroorotate + H2O = N-carbamoyl-L-aspartate + H(+). It functions in the pathway pyrimidine metabolism; UMP biosynthesis via de novo pathway; (S)-dihydroorotate from bicarbonate: step 3/3. Functionally, catalyzes the reversible cyclization of carbamoyl aspartate to dihydroorotate. In Shewanella sediminis (strain HAW-EB3), this protein is Dihydroorotase.